An 843-amino-acid polypeptide reads, in one-letter code: Eisosome protein 1 (843 aa).

The disordered stretch occupies residues 1 to 53; it reads MSLISAVEDRDIHNIGKTSGGGSRTSSITSSKKSLKHGSKSLRKPKVYQTTGE. Ser2 is modified (N-acetylserine). Phosphoserine is present on Ser2. The span at 33 to 46 shows a compositional bias: basic residues; the sequence is KSLKHGSKSLRKPK. A phosphoserine mark is found at Ser88 and Ser130. A disordered region spans residues 120-174; that stretch reads KMGPKVVRNNSITSATSKTSKESQTKRKSKESPGAAASKAYSMTMETTSLSSQTN. Polar residues-rich tracts occupy residues 127–137 and 163–174; these read RNNSITSATSK and TMETTSLSSQTN. Ser182, Ser401, Ser584, and Ser710 each carry phosphoserine. Residues 717–843 form a disordered region; it reads DLPTQLEKIE…QDAISNQEKK (127 aa). Thr720 is subject to Phosphothreonine. The span at 752 to 764 shows a compositional bias: low complexity; the sequence is STAAKEATETSSA. Phosphoserine occurs at positions 763 and 775. Over residues 781-797 the composition is skewed to basic and acidic residues; the sequence is SGKEDANDCKSAEHSKE. The segment covering 798-810 has biased composition (polar residues); the sequence is ISVSQKAGNNKSL. Phosphoserine occurs at positions 816, 828, 829, and 838.

It belongs to the EIS1 family.

It localises to the cytoplasmic granule. Its subcellular location is the cell membrane. Its function is as follows. Required for normal formation of eisosomes, large cytoplasmic protein assemblies that localize to specialized domains on plasma membrane and mark the site of endocytosis. This chain is Eisosome protein 1 (EIS1), found in Saccharomyces cerevisiae (strain ATCC 204508 / S288c) (Baker's yeast).